We begin with the raw amino-acid sequence, 196 residues long: Putative NADH dehydrogenase/NAD(P)H nitroreductase PXO_03909 (196 aa).

Belongs to the nitroreductase family. HadB/RutE subfamily. It depends on FMN as a cofactor.

The sequence is that of Putative NADH dehydrogenase/NAD(P)H nitroreductase PXO_03909 from Xanthomonas oryzae pv. oryzae (strain PXO99A).